We begin with the raw amino-acid sequence, 187 residues long: uncharacterized protein (187 aa).

Residues 6 to 66 form the HTH tetR-type domain; it reads TDLAEQIFSA…QFAHRVFSMF (61 aa). The H-T-H motif DNA-binding region spans 29-48; sequence SMLKLAKEANVAAGTIYLYF.

This is an uncharacterized protein from Haemophilus influenzae (strain ATCC 51907 / DSM 11121 / KW20 / Rd).